A 112-amino-acid chain; its full sequence is DNA-binding protein Mboo_1886 (112 aa).

It belongs to the PDCD5 family.

This is DNA-binding protein Mboo_1886 from Methanoregula boonei (strain DSM 21154 / JCM 14090 / 6A8).